A 329-amino-acid polypeptide reads, in one-letter code: Probable cell division protein WhiA (329 aa).

A DNA-binding region (H-T-H motif) is located at residues 275-308 (SLEELGALADPPLTKDAVAGRIRRLLAMADKRAQ).

The protein belongs to the WhiA family.

Functionally, involved in cell division and chromosome segregation. This Streptomyces griseus subsp. griseus (strain JCM 4626 / CBS 651.72 / NBRC 13350 / KCC S-0626 / ISP 5235) protein is Probable cell division protein WhiA.